The chain runs to 396 residues: Putative F-box protein At4g22660 (396 aa).

An F-box domain is found at 7 to 58; it reads PNTWSDLPLDLLNLVFKRLSFANFRQAKSVCSSWYSASKQSVPKNQIPWLML.

The polypeptide is Putative F-box protein At4g22660 (Arabidopsis thaliana (Mouse-ear cress)).